The primary structure comprises 509 residues: UDP-N-acetylmuramoyl-L-alanyl-D-glutamate--2,6-diaminopimelate ligase (509 aa).

Ser32 contacts UDP-N-acetyl-alpha-D-muramoyl-L-alanyl-D-glutamate. 117-123 (GTNGKTT) is a binding site for ATP. Residues 159–160 (TT), Ser186, Gln192, and Arg194 contribute to the UDP-N-acetyl-alpha-D-muramoyl-L-alanyl-D-glutamate site. Lys226 is modified (N6-carboxylysine). Meso-2,6-diaminopimelate is bound by residues Arg401, 425–428 (DNPR), Gly476, and Glu480. The short motif at 425–428 (DNPR) is the Meso-diaminopimelate recognition motif element.

This sequence belongs to the MurCDEF family. MurE subfamily. It depends on Mg(2+) as a cofactor. Carboxylation is probably crucial for Mg(2+) binding and, consequently, for the gamma-phosphate positioning of ATP.

The protein resides in the cytoplasm. The catalysed reaction is UDP-N-acetyl-alpha-D-muramoyl-L-alanyl-D-glutamate + meso-2,6-diaminopimelate + ATP = UDP-N-acetyl-alpha-D-muramoyl-L-alanyl-gamma-D-glutamyl-meso-2,6-diaminopimelate + ADP + phosphate + H(+). Its pathway is cell wall biogenesis; peptidoglycan biosynthesis. In terms of biological role, catalyzes the addition of meso-diaminopimelic acid to the nucleotide precursor UDP-N-acetylmuramoyl-L-alanyl-D-glutamate (UMAG) in the biosynthesis of bacterial cell-wall peptidoglycan. The protein is UDP-N-acetylmuramoyl-L-alanyl-D-glutamate--2,6-diaminopimelate ligase of Prochlorococcus marinus (strain NATL2A).